Here is a 332-residue protein sequence, read N- to C-terminus: Homoarginine-6-hydroxylase 2-ODD-C23.1 (332 aa).

In terms of domain architecture, Fe2OG dioxygenase spans 182–287 (PFWVMRLIGY…RVCVAFFYET (106 aa)). 3 residues coordinate Fe cation: His210, Asp212, and His268. 2-oxoglutarate is bound at residue Arg278.

This sequence belongs to the iron/ascorbate-dependent oxidoreductase family. Fe(2+) is required as a cofactor.

The protein resides in the cytoplasm. Its subcellular location is the cytosol. It catalyses the reaction L-homoarginine + 2-oxoglutarate + O2 = 6-hydroxy-L-homoarginine + succinate + CO2. Its activity is regulated as follows. Slightly inhibited by canavanine (Can), the 5-oxa-analog of arginine. Its function is as follows. 2-oxoglutarate-dependent dioxygenase catalyzing homoarginine 6-hydroxylation thus producing 6-hydroxy-L-homoarginine. Guanidine (Gd) is in turn synthesized by the spontaneous conversion of 6-hydroxy-L-homoarginine to (S)-2-amino-6-oxohexanoate (RHEA:79843); guanidine is a nitrogen-rich compound that can serve as a defense or signaling substance. The sequence is that of Homoarginine-6-hydroxylase 2-ODD-C23.1 from Arabidopsis thaliana (Mouse-ear cress).